The sequence spans 144 residues: Large ribosomal subunit protein uL15 (144 aa).

The segment at 1–57 (MKLNDLSPAPGSRREKHRPGRGIGSGLGKTGGRGHKGQTSRSGGTIAPGFEGGQQPL) is disordered. Residues 21–31 (RGIGSGLGKTG) are compositionally biased toward gly residues.

It belongs to the universal ribosomal protein uL15 family. As to quaternary structure, part of the 50S ribosomal subunit.

In terms of biological role, binds to the 23S rRNA. The polypeptide is Large ribosomal subunit protein uL15 (Pseudomonas fluorescens (strain ATCC BAA-477 / NRRL B-23932 / Pf-5)).